We begin with the raw amino-acid sequence, 203 residues long: Small ribosomal subunit protein uS4 (203 aa).

Residues 93–156 form the S4 RNA-binding domain; the sequence is RRLDNVVYRL…IKVPAILEAV (64 aa).

Belongs to the universal ribosomal protein uS4 family. Part of the 30S ribosomal subunit. Contacts protein S5. The interaction surface between S4 and S5 is involved in control of translational fidelity.

One of the primary rRNA binding proteins, it binds directly to 16S rRNA where it nucleates assembly of the body of the 30S subunit. Its function is as follows. With S5 and S12 plays an important role in translational accuracy. This chain is Small ribosomal subunit protein uS4, found in Streptococcus suis (strain 98HAH33).